A 331-amino-acid chain; its full sequence is uncharacterized protein (331 aa).

This sequence belongs to the ornithine cyclodeaminase/mu-crystallin family.

This is an uncharacterized protein from Sinorhizobium fredii (strain NBRC 101917 / NGR234).